The chain runs to 167 residues: Phospholipase A2 imperatoxin-1 (167 aa).

3 residues coordinate Ca(2+): W38, G40, and G42. Intrachain disulfides connect C39/C61, C60/C99, C67/C92, C90/C127, and C132/C144. H64 is an active-site residue. Position 65 (D65) interacts with Ca(2+). An N-linked (GlcNAc...) asparagine glycan is attached at N102. The propeptide occupies 136-140 (RRLAR).

This sequence belongs to the phospholipase A2 family. Group III subfamily. As to quaternary structure, heterodimer composed of a large subunit and a small subunit; disulfide-linked. Ca(2+) is required as a cofactor. Expressed by the venom gland.

The protein resides in the secreted. The catalysed reaction is a 1,2-diacyl-sn-glycero-3-phosphocholine + H2O = a 1-acyl-sn-glycero-3-phosphocholine + a fatty acid + H(+). In terms of biological role, phospholipase toxin, which may catalyze the calcium-dependent hydrolysis of the 2-acyl groups in 3-sn-phosphoglycerides. Inhibits both skeletal (RYR1) and cardiac (RYR2) ryanodine receptors (calcium release channels). Probably blocks ryanodine receptors by generating a lipid product. The polypeptide is Phospholipase A2 imperatoxin-1 (Pandinus imperator (Emperor scorpion)).